The sequence spans 786 residues: DENN domain-containing protein 1C (786 aa).

In terms of domain architecture, uDENN spans 13–158; the sequence is FDWFFEAGCP…MDSSITVRSE (146 aa). A cDENN domain is found at 182 to 318; the sequence is SLPSIPENRN…VVSLLRLRLR (137 aa). Residues 320–398 enclose the dDENN domain; it reads VALSPGEGVS…ESRLEKLNAG (79 aa). The short motif at 401–405 is the FXDXF motif element; sequence FSDQF. A disordered region spans residues 481–553; it reads KDGDSGLQRG…LSPGDTQNPW (73 aa). Basic and acidic residues predominate over residues 527–541; it reads LKTEEGPSEPLRERS. Positions 542 to 552 are enriched in polar residues; the sequence is PTLSPGDTQNP. At S565 the chain carries Phosphoserine. A Clathrin box motif is present at residues 570–579; the sequence is DLLSEILDSL. 2 disordered regions span residues 653-741 and 762-786; these read YSKN…QPPQ and SHVSTQQRPQDKQPRVADLKKCFEN. Over residues 657–675 the composition is skewed to low complexity; the sequence is SCSQPFQQSPPSQGDPGPS. Positions 706-740 are enriched in polar residues; the sequence is LLVSTEPNSDAVQRLQSISSPSCSHSAENPRNQPP. The span at 770–786 shows a compositional bias: basic and acidic residues; sequence PQDKQPRVADLKKCFEN.

In terms of assembly, exhibits low nucleotide-independent RAB35-binding activity. Interacts with clathrin heavy chain/CLTC and with AP2A2, but not with AP2B1.

The protein resides in the cytoplasm. It is found in the cytosol. It localises to the cytoplasmic vesicle. Its subcellular location is the clathrin-coated vesicle. In terms of biological role, guanine nucleotide exchange factor (GEF) which may activate RAB8A, RAB13 and RAB35. Promotes the exchange of GDP to GTP, converting inactive GDP-bound Rab proteins into their active GTP-bound form. This Mus musculus (Mouse) protein is DENN domain-containing protein 1C (Dennd1c).